The following is a 143-amino-acid chain: Trypsin inhibitor CMc (143 aa).

The N-terminal stretch at methionine 1–alanine 24 is a signal peptide.

It belongs to the protease inhibitor I6 (cereal trypsin/alpha-amylase inhibitor) family. As to expression, endosperm.

It localises to the secreted. Its function is as follows. Trypsin inhibitor. No alpha-amylase inhibition detected. This is Trypsin inhibitor CMc (ITR2) from Hordeum vulgare (Barley).